Consider the following 131-residue polypeptide: QRFP-like peptide (131 aa).

A signal peptide spans 1–25; that stretch reads MGVRVMRSRICVIGLLVLMLTQSEA. A propeptide spanning residues 26–94 is cleaved from the precursor; that stretch reads YSFREKSWRT…DDGISPADKR (69 aa). The tract at residues 48 to 131 is disordered; sequence RRDGGDQAPS…RESRRSFGSD (84 aa). Over residues 97–106 the composition is skewed to polar residues; that stretch reads MLQQLAQQLK. Phe119 bears the Phenylalanine amide mark. Residues 120–131 are compositionally biased toward basic and acidic residues; the sequence is GKRESRRSFGSD. Positions 123–131 are excised as a propeptide; the sequence is ESRRSFGSD.

Belongs to the RFamide neuropeptide family.

It localises to the secreted. Functionally, ligand for the G-protein coupled receptor QRFPR. In Branchiostoma floridae (Florida lancelet), this protein is QRFP-like peptide.